Here is a 48-residue protein sequence, read N- to C-terminus: Osteocalcin (48 aa).

Residues 1–46 (SFAVGSSYGAAPDPLEAQREVCELNPDCDELADHIGFQEAYRRFYG) form the Gla domain. Positions 16, 20, 23, and 29 each coordinate Ca(2+). A 4-carboxyglutamate mark is found at E16, E20, and E23. The cysteines at positions 22 and 28 are disulfide-linked.

The protein belongs to the osteocalcin/matrix Gla protein family. In terms of processing, gamma-carboxyglutamate residues are formed by vitamin K dependent carboxylation by GGCX. These residues are essential for the binding of calcium.

The protein localises to the secreted. The carboxylated form is one of the main organic components of the bone matrix, which constitutes 1-2% of the total bone protein. The carboxylated form binds strongly to apatite and calcium. In Dromaius novaehollandiae (Emu), this protein is Osteocalcin (BGLAP).